A 507-amino-acid polypeptide reads, in one-letter code: MTKYVAVIDQGTTSTRCMVFNKQGEIVAQHQLEHEQICPQAGWVEHDPLEIWERTKDVIHGSVAKAGLVAADIAAIGITNQRETTMIWNRKTGQPYGNAIVWQDTRTDIVCNQMSAEGGQNRFQAKTGLPLATYFSGPKIRWMLDHYPGLRQDAEKGEALFGNMDSWLIWKLTGGPGPAAVHVTDVTNASRTMLMNLKTLDWDEELLSAFAIPRAMLPSIRPSSDPEFYGFTRQDGPFGGEIPICGDLGDQQAATVGQVCFDAGEAKNTYGTGCFMLMNTGTEMVHSNHGLLTTVCYQFGHEKPHYALEGSVAIAGALVQWLRDRMRVINTAADIENLAKLVPDNGGMYFVPAFSGLFAPYWRSEARGLIIGMTRFINRGHFARASLEAAAYQTREVVDAMQADSNVSLKVLKVDGGMTANDLLMQIQADVLGVPVVRPKVAESTALGAAYAAGLAIGYWKNSDDLCQNWGVDKSWKPSGDDTLRTKNYAMWKKAVTRTFDWLDESA.

T12 is a binding site for ADP. ATP is bound by residues T12, T13, and S14. T12 contributes to the sn-glycerol 3-phosphate binding site. R16 provides a ligand contact to ADP. Residues R82, E83, Y134, and D250 each contribute to the sn-glycerol 3-phosphate site. The glycerol site is built by R82, E83, Y134, D250, and Q251. ADP contacts are provided by T272 and G316. Residues T272, G316, Q320, and G417 each coordinate ATP. Positions 417 and 421 each coordinate ADP.

Belongs to the FGGY kinase family.

It carries out the reaction glycerol + ATP = sn-glycerol 3-phosphate + ADP + H(+). It participates in polyol metabolism; glycerol degradation via glycerol kinase pathway; sn-glycerol 3-phosphate from glycerol: step 1/1. With respect to regulation, inhibited by fructose 1,6-bisphosphate (FBP). Its function is as follows. Key enzyme in the regulation of glycerol uptake and metabolism. Catalyzes the phosphorylation of glycerol to yield sn-glycerol 3-phosphate. The chain is Glycerol kinase from Beijerinckia indica subsp. indica (strain ATCC 9039 / DSM 1715 / NCIMB 8712).